Here is a 360-residue protein sequence, read N- to C-terminus: Peptide chain release factor 1 (360 aa).

N5-methylglutamine is present on Q235. A disordered region spans residues 284 to 303 (RERQSKEAAERKSLVGSGDR).

It belongs to the prokaryotic/mitochondrial release factor family. Methylated by PrmC. Methylation increases the termination efficiency of RF1.

Its subcellular location is the cytoplasm. Functionally, peptide chain release factor 1 directs the termination of translation in response to the peptide chain termination codons UAG and UAA. This is Peptide chain release factor 1 from Bordetella avium (strain 197N).